The chain runs to 310 residues: Prostate androgen-regulated mucin-like protein 1 homolog (310 aa).

The N-terminal stretch at 1–20 (MVYKTLFALCILTAGWRVQS) is a signal peptide. The Extracellular portion of the chain corresponds to 21–258 (LPTSAPLSVS…EVEHALSSGS (238 aa)). A compositionally biased stretch (polar residues) spans 40–74 (TIWTSSPQNTDADTASPSNGTHNNSVLPVTASAPT). Residues 40-224 (TIWTSSPQNT…VPQEKTPPTT (185 aa)) form a disordered region. Residues Asn58, Asn62, and Asn80 are each glycosylated (N-linked (GlcNAc...) asparagine). Over residues 92-103 (SPGSNWEGTNTD) the composition is skewed to polar residues. The span at 150-209 (SPQAPASSPSSLSTSPPEVFSVSVTTNHSSTVTSTQPTGAPTAPESPTEESSSDHTPTSH) shows a compositional bias: low complexity. Asn176 is a glycosylation site (N-linked (GlcNAc...) asparagine). The chain crosses the membrane as a helical span at residues 259-279 (IAAITVTVIAVVLLVFGVAAY). Residues 280–310 (LKIRHSSYGRLLDDHDYGSWGNYNNPLYDDS) are Cytoplasmic-facing. Residue Ser298 is modified to Phosphoserine.

It belongs to the PARM family. In terms of processing, highly N-glycosylated and O-glycosylated.

The protein resides in the cell membrane. Its subcellular location is the golgi apparatus membrane. The protein localises to the endosome membrane. In terms of biological role, may regulate TLP1 expression and telomerase activity, thus enabling certain prostatic cells to resist apoptosis. This is Prostate androgen-regulated mucin-like protein 1 homolog (PARM1) from Pongo abelii (Sumatran orangutan).